The primary structure comprises 460 residues: ATP synthase subunit beta (460 aa).

150 to 157 (GGAGVGKT) contributes to the ATP binding site.

Belongs to the ATPase alpha/beta chains family. In terms of assembly, F-type ATPases have 2 components, CF(1) - the catalytic core - and CF(0) - the membrane proton channel. CF(1) has five subunits: alpha(3), beta(3), gamma(1), delta(1), epsilon(1). CF(0) has three main subunits: a(1), b(2) and c(9-12). The alpha and beta chains form an alternating ring which encloses part of the gamma chain. CF(1) is attached to CF(0) by a central stalk formed by the gamma and epsilon chains, while a peripheral stalk is formed by the delta and b chains.

It is found in the cell inner membrane. The enzyme catalyses ATP + H2O + 4 H(+)(in) = ADP + phosphate + 5 H(+)(out). Its function is as follows. Produces ATP from ADP in the presence of a proton gradient across the membrane. The catalytic sites are hosted primarily by the beta subunits. The protein is ATP synthase subunit beta of Erwinia tasmaniensis (strain DSM 17950 / CFBP 7177 / CIP 109463 / NCPPB 4357 / Et1/99).